A 433-amino-acid chain; its full sequence is Urokinase-type plasminogen activator (433 aa).

The signal sequence occupies residues 1-20 (MRALLAHLLLCVLVVSASKG). Positions 26 to 62 (VPSDCGCLNGGTCMSNKYFSSIHWCNCPKKFGGQHCE) constitute an EGF-like domain. Intrachain disulfides connect cysteine 30–cysteine 38, cysteine 32–cysteine 50, cysteine 52–cysteine 61, cysteine 69–cysteine 150, cysteine 90–cysteine 132, and cysteine 121–cysteine 145. The interval 33-56 (LNGGTCMSNKYFSSIHWCNCPKKF) is binds urokinase plasminogen activator surface receptor. Residues 69-150 (CYEGNGHFYR…RVQECMVHNC (82 aa)) enclose the Kringle domain. Residues 151-177 (ADGKKPSSPPEELQFQCGQRTLRPRFK) form a connecting peptide region. Serine 157 carries the post-translational modification Phosphoserine. Intrachain disulfides connect cysteine 167/cysteine 298, cysteine 208/cysteine 224, cysteine 216/cysteine 287, cysteine 315/cysteine 384, cysteine 347/cysteine 363, and cysteine 374/cysteine 402. Residues 178 to 426 (IVGGEFTTIE…FLPWIHSHTR (249 aa)) enclose the Peptidase S1 domain. Catalysis depends on charge relay system residues histidine 223 and aspartate 274. An N-linked (GlcNAc...) asparagine glycan is attached at asparagine 324. Serine 325 carries the post-translational modification Phosphoserine. The Charge relay system role is filled by serine 378.

It belongs to the peptidase S1 family. Found in high and low molecular mass forms. Each consists of two chains, A and B. The high molecular mass form contains a long chain A which is cleaved to yield a short chain A. Forms heterodimer with SERPINA5. Binds LRP1B; binding is followed by internalization and degradation. Interacts with MRC2. Interacts with PLAUR. In complex with SERPINE1, interacts with PLAUR/uPAR. Interacts with SORL1 and LRP1, either alone or in complex with SERPINE1; these interactions are abolished in the presence of LRPAP1/RAP. The ternary complex composed of PLAUR-PLAU-PAI1 also interacts with SORLA. Post-translationally, phosphorylation of Ser-157 and Ser-325 abolishes proadhesive ability but does not interfere with receptor binding. Produced as an inactive single-chain protein (pro-uPA or sc-uPA), is processed into the active disulfide-linked two-chain form of PLAU/uPA by a proteolytic event mediated, at least, by TMPRSS4.

It localises to the secreted. The catalysed reaction is Specific cleavage of Arg-|-Val bond in plasminogen to form plasmin.. With respect to regulation, inhibited by SERPINA5. Inhibited by SERPINE1. In terms of biological role, specifically cleaves the zymogen plasminogen to form the active enzyme plasmin. The protein is Urokinase-type plasminogen activator (PLAU) of Papio cynocephalus (Yellow baboon).